The following is a 536-amino-acid chain: Phosphoenolpyruvate carboxykinase (ATP) (536 aa).

Substrate contacts are provided by arginine 61, tyrosine 195, and lysine 201. Residues lysine 201, histidine 220, and 236–244 contribute to the ATP site; that span reads GLSGTGKTT. Lysine 201 and histidine 220 together coordinate Mn(2+). Aspartate 257 serves as a coordination point for Mn(2+). Glutamate 285, arginine 322, and threonine 447 together coordinate ATP. Residue arginine 322 coordinates substrate.

It belongs to the phosphoenolpyruvate carboxykinase (ATP) family. Mn(2+) is required as a cofactor.

It is found in the cytoplasm. It catalyses the reaction oxaloacetate + ATP = phosphoenolpyruvate + ADP + CO2. The protein operates within carbohydrate biosynthesis; gluconeogenesis. Its function is as follows. Involved in the gluconeogenesis. Catalyzes the conversion of oxaloacetate (OAA) to phosphoenolpyruvate (PEP) through direct phosphoryl transfer between the nucleoside triphosphate and OAA. The sequence is that of Phosphoenolpyruvate carboxykinase (ATP) from Rhizobium etli (strain CIAT 652).